A 252-amino-acid chain; its full sequence is Probable transcriptional regulatory protein Npun_R5651 (252 aa).

It belongs to the TACO1 family.

It is found in the cytoplasm. The protein is Probable transcriptional regulatory protein Npun_R5651 of Nostoc punctiforme (strain ATCC 29133 / PCC 73102).